Here is a 456-residue protein sequence, read N- to C-terminus: Flagellum-specific ATP synthase (456 aa).

Residue 182 to 189 (AGSGVGKS) participates in ATP binding.

It belongs to the ATPase alpha/beta chains family.

Its subcellular location is the cytoplasm. It carries out the reaction ATP + H2O + 4 H(+)(in) = ADP + phosphate + 5 H(+)(out). In terms of biological role, probable catalytic subunit of a protein translocase for flagellum-specific export, or a proton translocase involved in local circuits at the flagellum. May be involved in a specialized protein export pathway that proceeds without signal peptide cleavage. This is Flagellum-specific ATP synthase (fliI) from Salmonella typhimurium (strain LT2 / SGSC1412 / ATCC 700720).